We begin with the raw amino-acid sequence, 583 residues long: CD166 antigen (583 aa).

The N-terminal stretch at Met-1–Gly-27 is a signal peptide. Ig-like V-type domains lie at Trp-28 to Asn-120 and Pro-125 to His-234. The Extracellular segment spans residues Trp-28 to Lys-527. 2 disulfide bridges follow: Cys-43-Cys-113 and Cys-157-Cys-220. Asn-91, Asn-95, Asn-167, Asn-265, Asn-306, Asn-361, Asn-457, Asn-480, and Asn-499 each carry an N-linked (GlcNAc...) asparagine glycan. Ig-like C2-type domains lie at Pro-245–Thr-328, Asp-333–Thr-409, and Pro-416–Ser-501. Intrachain disulfides connect Cys-270/Cys-313, Cys-354/Cys-392, and Cys-435/Cys-485. A helical membrane pass occupies residues Leu-528–Leu-549. Topologically, residues Tyr-550–Ala-583 are cytoplasmic. The tract at residues Asn-562–Ala-583 is disordered. A compositionally biased stretch (basic and acidic residues) spans Glu-569–Ala-583.

Homodimer. Interacts (via extracellular domain) with CD6 (via extracellular domain). Homodimerization and interaction with CD6 involve the same region and cannot occur simultaneously. The affinity for CD6 is much higher than the affinity for self-association. Interacts (via glycosylated extracellular domain) with LGALS1 and LGALS3. Interaction with LGALS1 or LGALS3 inhibits interaction with CD6. Post-translationally, glycosylated. Detected on hematopoietic stem cells derived from umbilical cord blood. Detected on lymph vessel endothelial cells, skin and tonsil. Detected on peripheral blood monocytes. Detected on monocyte-derived dendritic cells (at protein level). Detected at low levels in spleen, placenta, liver. Expressed by activated T-cells, B-cells, monocytes and thymic epithelial cells. Isoform 1 and isoform 3 are detected in vein and artery endothelial cells, astrocytes, keratinocytes and artery smooth muscle cells. Expressed by neurons in the brain. Restricted expression in tumor cell lines. Detected in highly metastasizing melanoma cell lines.

It is found in the cell membrane. The protein localises to the cell projection. Its subcellular location is the axon. The protein resides in the dendrite. It localises to the secreted. Cell adhesion molecule that mediates both heterotypic cell-cell contacts via its interaction with CD6, as well as homotypic cell-cell contacts. Promotes T-cell activation and proliferation via its interactions with CD6. Contributes to the formation and maturation of the immunological synapse via its interactions with CD6. Mediates homotypic interactions with cells that express ALCAM. Acts as a ligand for the LILRB4 receptor, enhancing LILRB4-mediated inhibition of T cell proliferation. Required for normal hematopoietic stem cell engraftment in the bone marrow. Mediates attachment of dendritic cells onto endothelial cells via homotypic interaction. Inhibits endothelial cell migration and promotes endothelial tube formation via homotypic interactions. Required for normal organization of the lymph vessel network. Required for normal hematopoietic stem cell engraftment in the bone marrow. Plays a role in hematopoiesis; required for normal numbers of hematopoietic stem cells in bone marrow. Promotes in vitro osteoblast proliferation and differentiation. Promotes neurite extension, axon growth and axon guidance; axons grow preferentially on surfaces that contain ALCAM. Mediates outgrowth and pathfinding for retinal ganglion cell axons. In terms of biological role, inhibits activities of membrane-bound isoforms by competing for the same interaction partners. Inhibits cell attachment via homotypic interactions. Promotes endothelial cell migration. Inhibits endothelial cell tube formation. This chain is CD166 antigen (ALCAM), found in Homo sapiens (Human).